The sequence spans 233 residues: MSVISMKQLLEAGVHFGHQTRRWNPKMAPYIFTERNGIYIIDLQKTVRKAEEAYNFIKEVSTEGKDILFVGTKKQAQDAIKDEAIRSSMHFVNNRWLGGMLTNFSTIKKRIRRLSEIERMQEDGTFEVLPKKEVIKLKGELEKLEKNLGGIKNLDCDNIGAMFVVDPRKEKNAISEAKILGIPVVAIVDTNCDPEEVDYVIPGNDDAIRAVKLITAKMADAIMEGRQGEELAE.

Belongs to the universal ribosomal protein uS2 family.

The chain is Small ribosomal subunit protein uS2 from Clostridium botulinum (strain Alaska E43 / Type E3).